We begin with the raw amino-acid sequence, 1310 residues long: Angiotensin-converting enzyme (1310 aa).

Positions 1–33 (MGAAPGRRGPRLLRPPPPLLLLLLLLRPPPAAL) are cleaved as a signal peptide. Residues 34–1260 (TLDPGLLPGD…GMNLDAQQAR (1227 aa)) lie on the Extracellular side of the membrane. 2 Peptidase M2 domains span residues 45–628 (AADE…LGWP) and 647–1226 (VTDE…LGWP). N-linked (GlcNAc...) asparagine glycosylation is found at Asn-59, Asn-79, and Asn-151. Cys-162 and Cys-170 are oxidised to a cystine. Tyr-236 is a chloride binding site. N-linked (GlcNAc...) asparagine glycosylation is present at Asn-323. Cys-364 and Cys-382 are disulfide-bonded. His-395 is a Zn(2+) binding site. Residue Glu-396 is the Proton acceptor 1 of the active site. Zn(2+)-binding residues include His-399 and Glu-422. N-linked (GlcNAc...) asparagine glycans are attached at residues Asn-449 and Asn-513. His-524 (proton donor 1) is an active-site residue. Chloride is bound at residue Arg-533. An intrachain disulfide couples Cys-549 to Cys-561. N-linked (GlcNAc...) asparagine glycans are attached at residues Asn-681, Asn-699, and Asn-718. Cysteines 761 and 767 form a disulfide. 2 residues coordinate chloride: Arg-795 and Tyr-833. Asn-946 carries N-linked (GlcNAc...) asparagine glycosylation. Cys-961 and Cys-979 are oxidised to a cystine. His-992 contributes to the Zn(2+) binding site. Glu-993 (proton acceptor 2) is an active-site residue. Zn(2+) contacts are provided by His-996 and Glu-1020. Chloride is bound by residues Trp-1094 and Arg-1098. Residue His-1122 is the Proton donor 2 of the active site. Arg-1131 serves as a coordination point for chloride. Residues Cys-1147 and Cys-1159 are joined by a disulfide bond. N-linked (GlcNAc...) asparagine glycosylation occurs at Asn-1195. The juxtamembrane stalk stretch occupies residues 1219–1260 (HGEKLGWPQYTWTPNSARSEGSLPDSGRVNFLGMNLDAQQAR). The helical transmembrane segment at 1261–1281 (VGQWVLLFLGVALLLASLGLT) threads the bilayer. The Cytoplasmic segment spans residues 1282-1310 (QRLFSIRYQSLRQPHHGPQFGSEVELRHS). A Phosphoserine modification is found at Ser-1303.

The protein belongs to the peptidase M2 family. As to quaternary structure, monomer and homodimer; homodimerizes following binding to an inhibitor. Interacts with calmodulin (CALM1, CALM2 or CALM3); interaction takes place in the cytoplasmic region and regulates phosphorylation and proteolytic cleavage. Zn(2+) serves as cofactor. It depends on chloride as a cofactor. N-glycosylated. In terms of processing, phosphorylated by CK2 on Ser-1303; which allows membrane retention. Phosphorylated on tyrosine residues on its extracellular part, promoting cleavage by secretase enzymes and formation of the soluble form (Angiotensin-converting enzyme, soluble form). Post-translationally, produced following proteolytic cleavage by secretase enzymes that cleave the transmembrane form in the juxtamembrane stalk region upstream of the transmembrane region. Cleavage can take place at different sites of the juxtamembrane stalk region. In terms of tissue distribution, testis-specific isoform is expressed in spermatocytes, adult testis.

It is found in the cell membrane. Its subcellular location is the cytoplasm. It localises to the secreted. It catalyses the reaction Release of a C-terminal dipeptide, oligopeptide-|-Xaa-Yaa, when Xaa is not Pro, and Yaa is neither Asp nor Glu. Thus, conversion of angiotensin I to angiotensin II, with increase in vasoconstrictor activity, but no action on angiotensin II.. It carries out the reaction angiotensin I + H2O = L-histidyl-L-leucine + angiotensin II. The enzyme catalyses bradykinin + H2O = L-Phe-L-Arg + bradykinin(1-7). The catalysed reaction is substance P + H2O = substance P(1-9) + L-Leu-L-Met-NH2. It catalyses the reaction substance P + H2O = substance P(1-8) + Gly-L-Leu-L-Met-NH2. It carries out the reaction substance P + H2O = L-Phe-L-Phe-Gly-L-Leu-L-Met-NH2 + substance P(1-6). The enzyme catalyses neurotensin + H2O = neurotensin(1-11) + L-isoleucyl-L-leucine. The catalysed reaction is goralatide + H2O = N-acetyl-L-seryl-L-aspartate + L-lysyl-L-proline. It catalyses the reaction Met-enkephalin + H2O = L-phenylalanyl-L-methionine + L-tyrosylglycylglycine. It carries out the reaction Leu-enkephalin + H2O = L-tyrosylglycylglycine + L-phenylalanyl-L-leucine. The enzyme catalyses Met-enkephalin-Arg-Phe + H2O = L-arginyl-L-phenylalanine + Met-enkephalin. With respect to regulation, the dipeptidyl carboxypeptidase activity is strongly activated by chloride. Specifically inhibited by lisinopril. Inhibited by mixanpril, an orally-active drug used for the treatment of hypertension. Strongly inhibited by lisinopril and captopril. Functionally, dipeptidyl carboxypeptidase that removes dipeptides from the C-terminus of a variety of circulating hormones, such as angiotensin I, bradykinin or enkephalins, thereby playing a key role in the regulation of blood pressure, electrolyte homeostasis or synaptic plasticity. Composed of two similar catalytic domains, each possessing a functional active site, with different selectivity for substrates. Plays a major role in the angiotensin-renin system that regulates blood pressure and sodium retention by the kidney by converting angiotensin I to angiotensin II, resulting in an increase of the vasoconstrictor activity of angiotensin. Also able to inactivate bradykinin, a potent vasodilator, and therefore enhance the blood pressure response. Acts as a regulator of synaptic transmission by mediating cleavage of neuropeptide hormones, such as substance P, neurotensin or enkephalins. Catalyzes degradation of different enkephalin neuropeptides (Met-enkephalin, Leu-enkephalin, Met-enkephalin-Arg-Phe and possibly Met-enkephalin-Arg-Gly-Leu). Acts as a regulator of synaptic plasticity in the nucleus accumbens of the brain by mediating cleavage of Met-enkephalin-Arg-Phe, a strong ligand of Mu-type opioid receptor OPRM1, into Met-enkephalin. Met-enkephalin-Arg-Phe cleavage by ACE decreases activation of OPRM1, leading to long-term synaptic potentiation of glutamate release. Also acts as a regulator of hematopoietic stem cell differentiation by mediating degradation of hemoregulatory peptide N-acetyl-SDKP (AcSDKP). Acts as a regulator of cannabinoid signaling pathway by mediating degradation of hemopressin, an antagonist peptide of the cannabinoid receptor CNR1. Involved in amyloid-beta metabolism by catalyzing degradation of Amyloid-beta protein 40 and Amyloid-beta protein 42 peptides, thereby preventing plaque formation. Catalyzes cleavage of cholecystokinin (maturation of Cholecystokinin-8 and Cholecystokinin-5) and Gonadoliberin-1 (both maturation and degradation) hormones. Degradation of hemoregulatory peptide N-acetyl-SDKP (AcSDKP) and amyloid-beta proteins is mediated by the N-terminal catalytic domain, while angiotensin I and cholecystokinin cleavage is mediated by the C-terminal catalytic region. Its function is as follows. Soluble form that is released in blood plasma and other body fluids following proteolytic cleavage in the juxtamembrane stalk region. Isoform produced by alternative promoter usage that is specifically expressed in spermatocytes and adult testis, and which is required for male fertility. In contrast to somatic isoforms, only contains one catalytic domain. Acts as a dipeptidyl carboxypeptidase that removes dipeptides from the C-terminus of substrates. The identity of substrates that are needed for male fertility is unknown. May also have a glycosidase activity which releases GPI-anchored proteins from the membrane by cleaving the mannose linkage in the GPI moiety. The GPIase activity was reported to be essential for the egg-binding ability of the sperm. This activity is however unclear and has been challenged by other groups, suggesting that it may be indirect. This is Angiotensin-converting enzyme from Oryctolagus cuniculus (Rabbit).